The chain runs to 417 residues: MRPSTTTLSLLVFLISSILLATTGKNSIIRYTYFPILLIICHLQLTNPPVNTASNIFDGSFEGTTLLNGLQQLNILVLTGVDVNDESGSSVFRRLKSALIYPFNARGVGTKYQIKNLPVLSSFICKEKQGESGLSSFLSSARYRFAIRQLAVSAWQYLLADIGFSLLKNIPTEKRLEYYGPEEEWMPQSLDQLRVRIEATLVFWVTLKAFAEIQSKIATALLTAVGVTSPHDWPPFFGSLREAYTLRGFWGKWWHQQLRWPLTSYSNFITRRVLKLTRSPLERYLNNALVFAQSGIVHVYFNWIKGVQDGDVGCMAFYISFVAGYFLEDHVQGLWRKAFDRTSAQESSLWLLERLVGALWVATFLTIVTPWWVYPFLRLSSSLKMPYSFVDVFGFQGALTVVFMGAAALRIGLNAEP.

The signal sequence occupies residues 1–24 (MRPSTTTLSLLVFLISSILLATTG). 5 helical membrane-spanning segments follow: residues 150 to 170 (LAVS…LKNI), 284 to 304 (YLNN…FNWI), 307 to 327 (VQDG…GYFL), 356 to 376 (VGAL…VYPF), and 389 to 409 (FVDV…AAAL).

It belongs to the wax synthase family.

Its subcellular location is the membrane. Its pathway is secondary metabolite biosynthesis. Functionally, acetyltransferase; part of the gene cluster that mediates the biosynthesis of the benzazepine alkaloid nanangelenin A which contains an unprecedented 3,4-dihydro-1-benzazepine-2,5-dione-N-prenyl-N-acetoxy-anthranilamide scaffold. The first step of nanangelenin biosynthesis is catalyzed by the indoleamine 2,3-dioxygenase nanC which produces N-formyl-kynurenine through the catabolism of tryptophan. The two-module NRPS nanA then utilizes anthranilate (Ant) and L-kynurenine (L-Kyn) to assemble the dipeptide product nanangelenin B. The first adenylation domain of nanA (A1) loads anthranilate onto the T1 domain, while A2 loads kynurenine, generated through spontaneous nonenzymatic deformylation of the nanC-supplied N-formyl-kynurenine. The peptide bond formation between the tethered amino acids is catalyzed by the first condensation domain (C1) between anthranilate's carbonyl carbon and kynurenine's aliphatic primary amine. The second C domain (C2) catalyzes the final cyclization event between the aromatic amine of kynurenine and the tethered carbonyl carbon, yielding nanangelenin B. The terminal T3 domain enhances the catalytic efficiency of C2, suggesting the T2-tethered Ant-L-Kyn is transferred to T3 prior to cyclization by C2. Once released from nanA, nanangelenin B is then prenylated by the prenyltransferase nanD to form nanangelenin C. Nanangelenin C is then N-hydroxylated by the FAD-dependent monooxygenase nanF and further acetylated by the acetyltransferase nanB to yield nanangelenin F. Finally, the N-methyltransferase nanE methylates the amide nitrogen of 1-benzazepine to convert nanangelenin F into nanangelenin A. NanE is also able to methylate most of the intermediates of the pathway such as nanangelenin B and nanangelenin C to produce nanangelenin D and nanangelenin E, respectively. The polypeptide is Acetyltransferase nanB (Aspergillus nanangensis).